The chain runs to 25 residues: uncharacterized protein (25 aa).

This is an uncharacterized protein from Ornithodoros (relapsing fever ticks).